The primary structure comprises 522 residues: Protein nucleotidyltransferase YdiU (522 aa).

Gly-109, Gly-111, Arg-112, Lys-132, Asp-144, Gly-145, Arg-195, and Arg-202 together coordinate ATP. The Proton acceptor role is filled by Asp-271. Residues Asn-272 and Asp-281 each contribute to the Mg(2+) site. Residue Asp-281 participates in ATP binding.

Belongs to the SELO family. Mg(2+) serves as cofactor. It depends on Mn(2+) as a cofactor.

The catalysed reaction is L-seryl-[protein] + ATP = 3-O-(5'-adenylyl)-L-seryl-[protein] + diphosphate. The enzyme catalyses L-threonyl-[protein] + ATP = 3-O-(5'-adenylyl)-L-threonyl-[protein] + diphosphate. It catalyses the reaction L-tyrosyl-[protein] + ATP = O-(5'-adenylyl)-L-tyrosyl-[protein] + diphosphate. It carries out the reaction L-histidyl-[protein] + UTP = N(tele)-(5'-uridylyl)-L-histidyl-[protein] + diphosphate. The catalysed reaction is L-seryl-[protein] + UTP = O-(5'-uridylyl)-L-seryl-[protein] + diphosphate. The enzyme catalyses L-tyrosyl-[protein] + UTP = O-(5'-uridylyl)-L-tyrosyl-[protein] + diphosphate. Its function is as follows. Nucleotidyltransferase involved in the post-translational modification of proteins. It can catalyze the addition of adenosine monophosphate (AMP) or uridine monophosphate (UMP) to a protein, resulting in modifications known as AMPylation and UMPylation. The sequence is that of Protein nucleotidyltransferase YdiU from Burkholderia orbicola (strain MC0-3).